Consider the following 121-residue polypeptide: Large ribosomal subunit protein uL18 (121 aa).

It belongs to the universal ribosomal protein uL18 family. In terms of assembly, part of the 50S ribosomal subunit; part of the 5S rRNA/L5/L18/L25 subcomplex. Contacts the 5S and 23S rRNAs.

Its function is as follows. This is one of the proteins that bind and probably mediate the attachment of the 5S RNA into the large ribosomal subunit, where it forms part of the central protuberance. The polypeptide is Large ribosomal subunit protein uL18 (Caldanaerobacter subterraneus subsp. tengcongensis (strain DSM 15242 / JCM 11007 / NBRC 100824 / MB4) (Thermoanaerobacter tengcongensis)).